Reading from the N-terminus, the 138-residue chain is uncharacterized protein (138 aa).

Residue 35 to 42 (DFIGSFYN) participates in ATP binding.

This is an uncharacterized protein from Acanthamoeba polyphaga mimivirus (APMV).